Reading from the N-terminus, the 865-residue chain is Leucine--tRNA ligase (865 aa).

Residues 48-58 carry the 'HIGH' region motif; that stretch reads PYPSGQLHVGH. The short motif at 626–630 is the 'KMSKS' region element; it reads KMSKS. ATP is bound at residue K629.

This sequence belongs to the class-I aminoacyl-tRNA synthetase family.

The protein localises to the cytoplasm. It catalyses the reaction tRNA(Leu) + L-leucine + ATP = L-leucyl-tRNA(Leu) + AMP + diphosphate. This chain is Leucine--tRNA ligase, found in Gluconobacter oxydans (strain 621H) (Gluconobacter suboxydans).